The following is a 101-amino-acid chain: Urease subunit beta (101 aa).

It belongs to the urease beta subunit family. As to quaternary structure, heterotrimer of UreA (gamma), UreB (beta) and UreC (alpha) subunits. Three heterotrimers associate to form the active enzyme.

The protein localises to the cytoplasm. The catalysed reaction is urea + 2 H2O + H(+) = hydrogencarbonate + 2 NH4(+). It participates in nitrogen metabolism; urea degradation; CO(2) and NH(3) from urea (urease route): step 1/1. The sequence is that of Urease subunit beta from Cupriavidus necator (strain ATCC 17699 / DSM 428 / KCTC 22496 / NCIMB 10442 / H16 / Stanier 337) (Ralstonia eutropha).